Consider the following 222-residue polypeptide: Extracellular protein ARB_03106 (222 aa).

The N-terminal stretch at 1-18 (MRLHSVLAVATAVGCAVA) is a signal peptide. N-linked (GlcNAc...) asparagine glycans are attached at residues Asn-113 and Asn-126.

The protein localises to the secreted. The chain is Extracellular protein ARB_03106 from Arthroderma benhamiae (strain ATCC MYA-4681 / CBS 112371) (Trichophyton mentagrophytes).